The sequence spans 503 residues: Aspartyl/glutamyl-tRNA(Asn/Gln) amidotransferase subunit B (503 aa).

Belongs to the GatB/GatE family. GatB subfamily. In terms of assembly, heterotrimer of A, B and C subunits.

It catalyses the reaction L-glutamyl-tRNA(Gln) + L-glutamine + ATP + H2O = L-glutaminyl-tRNA(Gln) + L-glutamate + ADP + phosphate + H(+). The enzyme catalyses L-aspartyl-tRNA(Asn) + L-glutamine + ATP + H2O = L-asparaginyl-tRNA(Asn) + L-glutamate + ADP + phosphate + 2 H(+). Functionally, allows the formation of correctly charged Asn-tRNA(Asn) or Gln-tRNA(Gln) through the transamidation of misacylated Asp-tRNA(Asn) or Glu-tRNA(Gln) in organisms which lack either or both of asparaginyl-tRNA or glutaminyl-tRNA synthetases. The reaction takes place in the presence of glutamine and ATP through an activated phospho-Asp-tRNA(Asn) or phospho-Glu-tRNA(Gln). This is Aspartyl/glutamyl-tRNA(Asn/Gln) amidotransferase subunit B from Jannaschia sp. (strain CCS1).